The following is a 118-amino-acid chain: Small ribosomal subunit protein uS13 (118 aa).

The tract at residues 91-118 (HRRGLPVRGQRTKTNARTRKGPRKPIKK) is disordered.

The protein belongs to the universal ribosomal protein uS13 family. Part of the 30S ribosomal subunit. Forms a loose heterodimer with protein S19. Forms two bridges to the 50S subunit in the 70S ribosome.

Its function is as follows. Located at the top of the head of the 30S subunit, it contacts several helices of the 16S rRNA. In the 70S ribosome it contacts the 23S rRNA (bridge B1a) and protein L5 of the 50S subunit (bridge B1b), connecting the 2 subunits; these bridges are implicated in subunit movement. Contacts the tRNAs in the A and P-sites. The chain is Small ribosomal subunit protein uS13 from Sodalis glossinidius (strain morsitans).